The chain runs to 249 residues: uncharacterized protein (249 aa).

Its subcellular location is the cytoplasm. The protein localises to the nucleus. This is an uncharacterized protein from Schizosaccharomyces pombe (strain 972 / ATCC 24843) (Fission yeast).